A 118-amino-acid chain; its full sequence is Small ribosomal subunit protein uS13 (118 aa).

The segment at 92–118 (RRNLPVRGQNTKNNARTRKGPTRPLKR) is disordered. Positions 106 to 118 (ARTRKGPTRPLKR) are enriched in basic residues.

This sequence belongs to the universal ribosomal protein uS13 family. Part of the 30S ribosomal subunit. Forms a loose heterodimer with protein S19. Forms two bridges to the 50S subunit in the 70S ribosome.

Located at the top of the head of the 30S subunit, it contacts several helices of the 16S rRNA. In the 70S ribosome it contacts the 23S rRNA (bridge B1a) and protein L5 of the 50S subunit (bridge B1b), connecting the 2 subunits; these bridges are implicated in subunit movement. Contacts the tRNAs in the A and P-sites. This Psychrobacter arcticus (strain DSM 17307 / VKM B-2377 / 273-4) protein is Small ribosomal subunit protein uS13.